Consider the following 254-residue polypeptide: Ciliary microtubule associated protein 1A (254 aa).

STPGR repeat units follow at residues 180–205 and 216–241; these read PGPAAYRQTDVRVTKFKAPQYTMAAR and PGPGAHSPEKVTLTKPCAPVVTFGIK. Residues 207–226 form a disordered region; sequence EPPGDKTLKPGPGAHSPEKV.

The protein belongs to the CIMAP family. As to quaternary structure, microtubule inner protein component of sperm flagellar doublet microtubules. As to expression, testis-specific.

Its subcellular location is the cytoplasm. The protein resides in the cytoskeleton. It localises to the flagellum axoneme. Outer dense fibers are filamentous structures located on the outside of the axoneme in the midpiece and principal piece of the mammalian sperm tail. May help to maintain the passive elastic structures and elastic recoil of the sperm tail. This Homo sapiens (Human) protein is Ciliary microtubule associated protein 1A.